A 580-amino-acid chain; its full sequence is Lysine--tRNA ligase (580 aa).

The short motif at P43–N51 is the 'HIGH' region element. The tract at residues K178 to S209 is disordered. Positions A196–S209 are enriched in low complexity. The short motif at K325–S329 is the 'KMSKS' region element.

Belongs to the class-I aminoacyl-tRNA synthetase family.

It is found in the cytoplasm. It carries out the reaction tRNA(Lys) + L-lysine + ATP = L-lysyl-tRNA(Lys) + AMP + diphosphate. In Streptomyces coelicolor (strain ATCC BAA-471 / A3(2) / M145), this protein is Lysine--tRNA ligase (lysS).